An 85-amino-acid chain; its full sequence is UPF0386 protein VF_0869 (85 aa).

The protein belongs to the UPF0386 family.

In Aliivibrio fischeri (strain ATCC 700601 / ES114) (Vibrio fischeri), this protein is UPF0386 protein VF_0869.